Here is a 203-residue protein sequence, read N- to C-terminus: Dephospho-CoA kinase (203 aa).

A DPCK domain is found at 10–203; it reads IIGITGNIGS…LTGGAKGGRG (194 aa). Residue 18–23 coordinates ATP; sequence GSGKST.

The protein belongs to the CoaE family.

The protein resides in the cytoplasm. It carries out the reaction 3'-dephospho-CoA + ATP = ADP + CoA + H(+). It participates in cofactor biosynthesis; coenzyme A biosynthesis; CoA from (R)-pantothenate: step 5/5. Its function is as follows. Catalyzes the phosphorylation of the 3'-hydroxyl group of dephosphocoenzyme A to form coenzyme A. The polypeptide is Dephospho-CoA kinase (Thermus thermophilus (strain ATCC BAA-163 / DSM 7039 / HB27)).